The primary structure comprises 85 residues: Alpha-insect toxin BjaIT (85 aa).

Positions 1 to 19 (MNYLVVICFALLLMTGVES) are cleaved as a signal peptide. An LCN-type CS-alpha/beta domain is found at 21–83 (RDAYIADNLN…VPIRIPGACR (63 aa)). Disulfide bonds link cysteine 31–cysteine 82, cysteine 35–cysteine 55, cysteine 41–cysteine 65, and cysteine 45–cysteine 67. Arginine 83 carries the arginine amide modification.

This sequence belongs to the long (4 C-C) scorpion toxin superfamily. Sodium channel inhibitor family. Alpha subfamily. Expressed by the venom gland.

The protein localises to the secreted. Functionally, alpha toxins bind voltage-independently at site-3 of sodium channels (Nav) and inhibit the inactivation of the activated channels, thereby blocking neuronal transmission. This toxin is active against insects (para/tipE). This Hottentotta judaicus (Black scorpion) protein is Alpha-insect toxin BjaIT.